The primary structure comprises 622 residues: Probable ATP-dependent RNA helicase DDX41 (622 aa).

A compositionally biased stretch (basic and acidic residues) spans 1–15 (MEDSEPERKRARADE). Disordered regions lie at residues 1-39 (MEDS…YVPL) and 51-84 (LQRR…PQSN). Ser-4 bears the Phosphoserine mark. Lys-9 bears the N6-acetyllysine mark. Lys-9 is covalently cross-linked (Glycyl lysine isopeptide (Lys-Gly) (interchain with G-Cter in ubiquitin)). Phosphoserine is present on residues Ser-21 and Ser-23. The span at 24–33 (EDEDEDDEDY) shows a compositional bias: acidic residues. Phosphotyrosine is present on Tyr-33. Lys-115 is covalently cross-linked (Glycyl lysine isopeptide (Lys-Gly) (interchain with G-Cter in ubiquitin)). A Q motif motif is present at residues 181 to 209 (KSFKEMKFPAAILRGLKKKGILHPTPIQI). The Helicase ATP-binding domain maps to 212–396 (IPTILSGRDM…KSALVKPVTI (185 aa)). Residue 225–232 (AFTGSGKT) participates in ATP binding. The DEAD box motif lies at 344 to 347 (DEAD). One can recognise a Helicase C-terminal domain in the interval 407-567 (DVIQEVEYVK…KVPPVLQVLH (161 aa)). Phosphotyrosine is present on Tyr-414. Glycyl lysine isopeptide (Lys-Gly) (interchain with G-Cter in SUMO2) cross-links involve residues Lys-416 and Lys-442. The CCHC-type zinc finger occupies 580–597 (RGCAFCGGLGHRITDCPK).

This sequence belongs to the DEAD box helicase family. DDX41 subfamily. In terms of assembly, identified in the spliceosome C complex. Interacts with ERCC6. Interacts with FAM50A. Interacts with STING1. Interacts with CGAS. Interacts with several spliceosomes components such as PRP19 or CDC5L. In terms of processing, acetylation at Lys-9 regulates the nuclear/cytoplasmic localization. Post-translationally, phosphorylated by BTK; phosphorylation induces binding to dsDNA and STING1. 'Lys-48'-linked ubiquitinated and degraded by TRIM21 leading to negative regulation of the innate immune response to intracellular dsDNA.

It localises to the nucleus. Its subcellular location is the cytoplasm. It carries out the reaction ATP + H2O = ADP + phosphate + H(+). Functionally, multifunctional protein that participates in many aspects of cellular RNA metabolism. Plays pivotal roles in innate immune sensing and hematopoietic homeostasis. Recognizes foreign or self-nucleic acids generated during microbial infection, thereby initiating anti-pathogen responses. Mechanistically, phosphorylation by BTK allows binding to dsDNA leading to interaction with STING1. Modulates the homeostasis of dsDNA through its ATP-dependent DNA-unwinding activity and ATP-independent strand-annealing activity. In turn, induces STING1-mediated type I interferon and cytokine responses to DNA and DNA viruses. During murine leukemia virus infection, primarily senses the DNA/RNA hybrid generated at the first step of reverse transcription, while cGAS recognizes dsDNA generated at the next step and both are needed for the antiretroviral innate immune response. Selectively modulates the transcription of certain immunity-associated genes by regulating their alternative splicing. Binds to RNA (R)-loops, structures consisting of DNA/RNA hybrids and a displaced strand of DNA that occur during transcription, and prevents their accumulation, thereby maintaining genome stability. Also participates in pre-mRNA splicing, translational regulation and snoRNA processing, which is essential for ribosome biogenesis. The polypeptide is Probable ATP-dependent RNA helicase DDX41 (Ddx41) (Mus musculus (Mouse)).